The following is a 207-amino-acid chain: Segregation and condensation protein B (207 aa).

The tract at residues 173–207 is disordered; the sequence is DDTAESDNDSADLYYRQFEQTLNETGPETAPKGEQ.

This sequence belongs to the ScpB family. In terms of assembly, homodimer. Homodimerization may be required to stabilize the binding of ScpA to the Smc head domains. Component of a cohesin-like complex composed of ScpA, ScpB and the Smc homodimer, in which ScpA and ScpB bind to the head domain of Smc. The presence of the three proteins is required for the association of the complex with DNA.

The protein localises to the cytoplasm. Its function is as follows. Participates in chromosomal partition during cell division. May act via the formation of a condensin-like complex containing Smc and ScpA that pull DNA away from mid-cell into both cell halves. The chain is Segregation and condensation protein B from Latilactobacillus sakei subsp. sakei (strain 23K) (Lactobacillus sakei subsp. sakei).